The sequence spans 466 residues: Histidine--tRNA ligase (466 aa).

Belongs to the class-II aminoacyl-tRNA synthetase family. In terms of assembly, homodimer.

Its subcellular location is the cytoplasm. The catalysed reaction is tRNA(His) + L-histidine + ATP = L-histidyl-tRNA(His) + AMP + diphosphate + H(+). The sequence is that of Histidine--tRNA ligase from Bifidobacterium longum subsp. infantis (strain ATCC 15697 / DSM 20088 / JCM 1222 / NCTC 11817 / S12).